The chain runs to 387 residues: Exodeoxyribonuclease 7 large subunit (387 aa).

It belongs to the XseA family. In terms of assembly, heterooligomer composed of large and small subunits.

It is found in the cytoplasm. The enzyme catalyses Exonucleolytic cleavage in either 5'- to 3'- or 3'- to 5'-direction to yield nucleoside 5'-phosphates.. In terms of biological role, bidirectionally degrades single-stranded DNA into large acid-insoluble oligonucleotides, which are then degraded further into small acid-soluble oligonucleotides. This Campylobacter hominis (strain ATCC BAA-381 / DSM 21671 / CCUG 45161 / LMG 19568 / NCTC 13146 / CH001A) protein is Exodeoxyribonuclease 7 large subunit.